The primary structure comprises 275 residues: 2,3,4,5-tetrahydropyridine-2,6-dicarboxylate N-succinyltransferase (275 aa).

The substrate site is built by R104 and D141.

The protein belongs to the transferase hexapeptide repeat family. Homotrimer.

The protein localises to the cytoplasm. It catalyses the reaction (S)-2,3,4,5-tetrahydrodipicolinate + succinyl-CoA + H2O = (S)-2-succinylamino-6-oxoheptanedioate + CoA. It participates in amino-acid biosynthesis; L-lysine biosynthesis via DAP pathway; LL-2,6-diaminopimelate from (S)-tetrahydrodipicolinate (succinylase route): step 1/3. The sequence is that of 2,3,4,5-tetrahydropyridine-2,6-dicarboxylate N-succinyltransferase from Tolumonas auensis (strain DSM 9187 / NBRC 110442 / TA 4).